The following is a 67-amino-acid chain: MPQLDTSTWFITILSMLMTLFILFQLKLSKHIYYPTPEPKFSKTHKQNTPWETKWKKIYLPLLLPQQ.

A helical membrane pass occupies residues Thr8–Phe24. Lys54 is modified (N6-acetyllysine; alternate). Position 54 is an N6-succinyllysine; alternate (Lys54). Residue Lys57 is modified to N6-acetyllysine.

The protein belongs to the ATPase protein 8 family. In terms of assembly, F-type ATPases have 2 components, CF(1) - the catalytic core - and CF(0) - the membrane proton channel. Component of an ATP synthase complex composed of ATP5PB, ATP5MC1, ATP5F1E, ATP5PD, ATP5ME, ATP5PF, ATP5MF, MT-ATP6, MT-ATP8, ATP5F1A, ATP5F1B, ATP5F1D, ATP5F1C, ATP5PO, ATP5MG, ATP5MK and ATP5MJ. Interacts with PRICKLE3.

It localises to the mitochondrion membrane. Mitochondrial membrane ATP synthase (F(1)F(0) ATP synthase or Complex V) produces ATP from ADP in the presence of a proton gradient across the membrane which is generated by electron transport complexes of the respiratory chain. F-type ATPases consist of two structural domains, F(1) - containing the extramembraneous catalytic core and F(0) - containing the membrane proton channel, linked together by a central stalk and a peripheral stalk. During catalysis, ATP synthesis in the catalytic domain of F(1) is coupled via a rotary mechanism of the central stalk subunits to proton translocation. Part of the complex F(0) domain. Minor subunit located with subunit a in the membrane. The chain is ATP synthase protein 8 (MT-ATP8) from Vicugna pacos (Alpaca).